A 563-amino-acid chain; its full sequence is IQCJ-SCHIP1 readthrough transcript protein (563 aa).

Positions 47–67 (ESKVKIIQRAWREYLQRQEPL) constitute an IQ domain. 4 disordered regions span residues 63–150 (RQEP…VSAL), 164–295 (VIDE…EPPV), 312–336 (FREQ…NERE), and 384–430 (SGSD…SLDD). Over residues 76-87 (SVSSEKLSSSVS) the composition is skewed to low complexity. Residues 88 to 97 (MNTFSDSSTP) show a composition bias toward polar residues. Positions 108–143 (SDAGSSSSSSRASSQSNSTKVTPCSECKSSSSPGGS) are enriched in low complexity. Over residues 168-182 (WAPEEDGEEEEEEDE) the composition is skewed to acidic residues. 2 stretches are compositionally biased toward basic and acidic residues: residues 183–199 (RDQR…REPG) and 229–238 (HQHDPQDLRH). Ser-193 bears the Phosphoserine mark. Over residues 318-331 (RNQGQARTNSTSAQ) the composition is skewed to polar residues. Residues 385–399 (GSDKDSDADDSKTET) are compositionally biased toward basic and acidic residues. Over residues 400 to 411 (SLDTPLSPMSKQ) the composition is skewed to polar residues. Residues 419 to 563 (DTTEEESESL…KHMAEKMPAK (145 aa)) are required for interaction with ankyrins. Positions 420-430 (TTEEESESLDD) are enriched in acidic residues. Residues 500 to 534 (IGQLQVIVNDLHSQIESLNEELVQLLLIRDELHTE) adopt a coiled-coil conformation.

In terms of assembly, homooligomer (via coiled coil domain). Interacts (via IQ domain) with calmodulin; the interaction is direct and lost in presence of calcium. Interacts with ANK3 (via ANK repeats); required for localization at axon initial segments (AIS) and nodes of Ranvier. Interacts with SPTBN4. Interacts with KCNQ2 and KCNQ3. As to expression, highly expressed in brain and to a lower extent in heart and kidney.

The protein resides in the cell projection. It localises to the axon. Its subcellular location is the cytoplasm. In terms of biological role, may play a role in action potential conduction in myelinated cells through the organization of molecular complexes at nodes of Ranvier and axon initial segments. May also play a role in axon outgrowth and guidance. This Homo sapiens (Human) protein is IQCJ-SCHIP1 readthrough transcript protein.